The chain runs to 223 residues: ATP phosphoribosyltransferase (223 aa).

Belongs to the ATP phosphoribosyltransferase family. Short subfamily. As to quaternary structure, heteromultimer composed of HisG and HisZ subunits.

Its subcellular location is the cytoplasm. The enzyme catalyses 1-(5-phospho-beta-D-ribosyl)-ATP + diphosphate = 5-phospho-alpha-D-ribose 1-diphosphate + ATP. It functions in the pathway amino-acid biosynthesis; L-histidine biosynthesis; L-histidine from 5-phospho-alpha-D-ribose 1-diphosphate: step 1/9. Functionally, catalyzes the condensation of ATP and 5-phosphoribose 1-diphosphate to form N'-(5'-phosphoribosyl)-ATP (PR-ATP). Has a crucial role in the pathway because the rate of histidine biosynthesis seems to be controlled primarily by regulation of HisG enzymatic activity. The sequence is that of ATP phosphoribosyltransferase from Sphingopyxis alaskensis (strain DSM 13593 / LMG 18877 / RB2256) (Sphingomonas alaskensis).